The primary structure comprises 314 residues: Lipoyl synthase (314 aa).

Positions 55, 60, 66, 81, 85, 88, and 292 each coordinate [4Fe-4S] cluster. A Radical SAM core domain is found at 67–281; the sequence is WEDREATFLI…TQYAEGLGFS (215 aa).

The protein belongs to the radical SAM superfamily. Lipoyl synthase family. The cofactor is [4Fe-4S] cluster.

The protein localises to the cytoplasm. The enzyme catalyses [[Fe-S] cluster scaffold protein carrying a second [4Fe-4S](2+) cluster] + N(6)-octanoyl-L-lysyl-[protein] + 2 oxidized [2Fe-2S]-[ferredoxin] + 2 S-adenosyl-L-methionine + 4 H(+) = [[Fe-S] cluster scaffold protein] + N(6)-[(R)-dihydrolipoyl]-L-lysyl-[protein] + 4 Fe(3+) + 2 hydrogen sulfide + 2 5'-deoxyadenosine + 2 L-methionine + 2 reduced [2Fe-2S]-[ferredoxin]. Its pathway is protein modification; protein lipoylation via endogenous pathway; protein N(6)-(lipoyl)lysine from octanoyl-[acyl-carrier-protein]: step 2/2. In terms of biological role, catalyzes the radical-mediated insertion of two sulfur atoms into the C-6 and C-8 positions of the octanoyl moiety bound to the lipoyl domains of lipoate-dependent enzymes, thereby converting the octanoylated domains into lipoylated derivatives. The protein is Lipoyl synthase of Mycobacterium leprae (strain Br4923).